The following is a 64-amino-acid chain: uncharacterized protein (64 aa).

The segment at 1 to 64 (MNNPNIVPPH…QNQPPQRPQY (64 aa)) is disordered. Low complexity predominate over residues 8-32 (PPHFNQHQQQNHNQNQPPHHMNNPN).

This is an uncharacterized protein from Dictyostelium discoideum (Social amoeba).